The sequence spans 100 residues: Large ribosomal subunit protein uL23 (100 aa).

The protein belongs to the universal ribosomal protein uL23 family. In terms of assembly, part of the 50S ribosomal subunit. Contacts protein L29, and trigger factor when it is bound to the ribosome.

Functionally, one of the early assembly proteins it binds 23S rRNA. One of the proteins that surrounds the polypeptide exit tunnel on the outside of the ribosome. Forms the main docking site for trigger factor binding to the ribosome. The sequence is that of Large ribosomal subunit protein uL23 from Aeromonas salmonicida (strain A449).